Reading from the N-terminus, the 3746-residue chain is MGPSNPAMAYFKPSTRDTMDPCSGNAADGSIRVRFRGGIERWKECVNQVPERCDLSGLTTDSTRYQLASTGFGDASAAYQERLMTVPVDVHAALQELCLERRVSVGSVINFSVHQMLKGFGNGTHTITASLHREQNLQNSSPSWVVSPTIVTHENRDGWSVAQAVESIEAGRGSEKESVTAIDSGSSLVKMGLFDLLVSFVDADDARIPCFDFPLAVIVRECDANLSLTLRFSDCLFNEETICNFTDALNILLAEAVIGRVTPVADIELLSAEQKQQLEEWNNTDGEYPSSKRLHHLIEEVVERHEDKIAVVCDERELTYGELNAQGNSLARYLRSIGILPEQLVALFLDKSEKLIVTILGVWKSGAAYVPIDPTYPDERVRFVLDDTKARAIIASNQHVERLQREVIGDRNLCIIRLEPLLASLAQDSSKFPAHNLDDLPLTSQQLAYVTYTSGTTGFPKGIFKQHTNVVNSITDLSARYGVAGQHHEAILLFSACVFEPFVRQTLMALVNGHLLAVINDVEKYDADTLLPFIRRHSITYLNGTASVLQEYDFSDCPSLNRIILVGENLTEARYLALRQRFKNRILNEYGFTESAFVTALKIFDPESTRKDTSLGRPVRNVKCYILNPSLKRVPIGATGELHIGGLGISKGYLNRPELTPHRFIPNPFQTDCEKQLGINSLMYKTGDLARWLPNGEVEYLGRADFQIKLRGIRIEPGEIETMLAMYPRVRTSLVVSKKLRNGPEETTNEHLVGYYVCDSASVSEADLLSFLEKKLPRYMIPTRLVQLSQIPVNVNGKADLRALPAVDISNSTEVRSDLRGDTEIALGEIWADVLGARQRSVSRNDNFFRLGGHSITCIQLIARIRQRLSVSISVEDVFATRTLERMADLLQNKQQEKCDKPHEAPTELLEENAATDNIYLANSLQQGFVYHYLKSMEQSDAYVMQSVLRYNTTLSPDLFQRAWKHAQQSFPALRLRFSWEKEVFQLLDQDPPLDWRFLYFTDVAAGAVEDRKLEDLRRQDLTERFKLDVGRLFRVYLIKHSENRFTCLFSCHHAILDGWSLPLLFEKVHETYLQLLHGDNLTSSMDDPYTRTQRYLHAHREDHLDFWAGVVQKINERCDMNALLNERSRYKVQLADYDQVQEQRQLTIALSGDAWLADLRQTCSAQGITLHSILQFVWHAVLHAYGGGTHTITGTTISGRNLPILGIERAVGPYINTLPLVLDHSTFKDKTIMEAIEDVQAKVNVMNSRGNVELGRLHKTDLKHGLFDSLFVLENYPNLDKSRTLEHQTELGYSIEGGTEKLNYPLAVIAREVETTGGFTVSICYASELFEEVMISELLHMVQDTLMQVARGLNEPVGSLEYLSSIQLEQLAAWNATEAEFPDTTLHEMFENEASQKPDKIAVVYEETSLTYRELNERANRMAHQLRSDVSPNPNEVIALVMDKSEHMIVNILAVWKSGGAYVPIDPGYPNDRIQYILEDTQALAVIADSCYLPRIKGMAASGTLLYPSVLPANPDSKWSVSNPSPLSRSTDLAYIIYTSGTTGRPKGVTVEHHGVVNLQVSLSKVFGLRDTDDEVILSFSNYVFDHFVEQMTDAILNGQTLLVLNDGMRGDKERLYRYIEKNRVTYLSGTPSVVSMYEFSRFKDHLRRVDCVGEAFSEPVFDKIRETFHGLVINGYGPTEVSITTHKRLYPFPERRMDKSIGQQVHNSTSYVLNEDMKRTPIGSVGELYLGGEGVVRGYHNRADVTAERFIPNPFQSEEDKREGRNSRLYKTGDLVRWIPGSSGEVEYLGRNDFQVKIRGLRIELGEIEAILSSYHGIKQSVVIAKDCREGAQKFLVGYYVADAALPSAAIRRFMQSRLPGYMVPSRLILVSKFPVTPSGKLDTKALPPAEEESEIDVVPPRSEIERSLCDIWAELLEMHPEEIGIYSDFFSLGGDSLKSTKLSFMIHESFNRAVSVSALFCHRTVEAQTHLILNDAADVHEITPIDCNDTQMIPVSRAQERLLFIHEFENGSNAYNIDAAFELPGSVDASLLEQALRGNLARHEALRTLLVKDHATGIYLQKVLSPDEAQGMFSVNVDTAKQVERLDQEIASLSQHVFRLDDELPWEARILKLESGGLYLILAFHHTCFDAWSLKVFEQELRALYAALQKTKSAANLPALKAQYKEYALYHRRQLSGDRMRNLSDFWLRKLIGLEPLQLITDRPRPVQFKYDGDDLSIELSKKETENLRGVAKRCKSSLYVVLVSVYCVMLASYANQSDVSVGIPVSHRTHPQFQSVIGFFVNLVVLRVDISQSAICGLIRRVMKELVDAQLHQDMPFQEVTKLLQVDNDPSRHPLVQNVFNFESRANGEHDARSEDEGSLAFNQYRPVQPVDSVAKFDLNATVTELESGLRVNFNYATSLFNKSTIQGFLHTYEYLLRQLSELSAEGINEDTQLSLVRPTENGDLHLPLAQSPLATTAEEQKVASLNQAFEREAFLAAEKIAVVQGDRALSYADLNGQANQLARYIQSVSCIGADDGIALMLEKSIDTIICILAIWKAGAAYVPLDPTYPPGRVQLILEEIKAKAVLVHSSHASKCERHGAKVIAVDSPAIETAVSQQSAADLPTIASLGNLAYIIFTSGTSGKPKGVLVEQKAVLLLRDALRERYFGRDCTKHHGVLFLSNYVFDFSVEQLVLSVLSGHKLIVPPAEFVADDEFYRMASTHGLSYLSGTPSLLQKIDLARLDHLQVVTAAGEELHATQYEKMRRRFNGPIYNAYGVTETTVYNIIAEFTTNSIFENALREVLPGTRAYVLNAALQPVPFDAVGELYLAGDSVTRGYLNQPLLTDQRFIPNPFCKEEDIAMGRFARLYKTGDLVRSRFNRQQQPQLEYLGRGDLQIKMRGYRIEISEVQNVLTSSPGVREGAVVAKYENNDTYSRTAHSLVGYYTTDNETVSEADILTFMKARLPTYMVPSHLCCLEGALPVTINGKLDVRRLPEIINDSAQSSYSPPRNIIEAKMCRLWESALGMERCGIDDDLFKLGGDSITSLHLVAQIHNQVGCKITVRDIFEHRTARALHDHVFMKDSDRSNVTQFRTEQGPVIGEAPLLPIQDWFLSKALQHPMYWNHTFYVRTPELDVDSLSAAVRDLQQYHDVFRMRLKREEVGFVQSFAEDFSPAQLRVLNVKDVDGSAAVNEILDGWQSGFNLENGPIGSIGYLHGYEDRSARVWFSVHHMAIDTVSWQILVRDLQTLYRNGSLGSKGSSFRQWAEAIQNYKASDSERNHWNKLVMETASSISALPTSTGSRVRLSRSLSPEKTASLIQGGIDRQDVSVYDSLLTSVGLALQHIAPTGPSMVTIEGHGREEVDQTLDVSRTMGWFTTMYPFEIPRLSTENIVQGVVAVSERFRQVPARGVGYGTLYGYTQHPLPQVTVNYLGQLARKQSKPKEWVLAVGDNEFEYGLMTSPEDKDRSSSAVDVTAVCIDGTMIIDVDSAWSLEESEQFISSIEEGLNKILDGRASQQTSRFPDVPQPAETYTPYFEYLEPPRQGPTLFLLPPGEGGAESYFNNIVKRLRQTNMVVFNNYYLHSKRLRTFEELAEMYLDQVRGIQPHGPYHFIGWSFGGILAMEMSRRLVASDEKIGFLGIIDTYFNVRGATRTIGLGDTEILDPIHHIYNPDPANFQRLPSATDRIVLFKAMRPNNKYESENQRRLYEYYDGTRLNGLDSLLPSDSDVQLVPLTDDTHFSWVGNPQQVEQMCATIKEHLARY.

An adenylation (A) domain 1 region spans residues 299–711 (EEVVERHEDK…GRADFQIKLR (413 aa)). Residues 818–895 (DLRGDTEIAL…RMADLLQNKQ (78 aa)) enclose the Carrier 1 domain. At serine 855 the chain carries O-(pantetheine 4'-phosphoryl)serine. The condensation (C) domain 1 stretch occupies residues 918 to 1372 (NIYLANSLQQ…YLSSIQLEQL (455 aa)). An adenylation (A) domain 2 region spans residues 1391–1801 (FENEASQKPD…GRNDFQVKIR (411 aa)). One can recognise a Carrier 2 domain in the interval 1902 to 1979 (PPRSEIERSL…AQTHLILNDA (78 aa)). Serine 1939 carries the post-translational modification O-(pantetheine 4'-phosphoryl)serine. Residues 1994–2434 (QMIPVSRAQE…SELSAEGINE (441 aa)) form a condensation (C) domain 2 region. The tract at residues 2478–2883 (AFLAAEKIAV…GRGDLQIKMR (406 aa)) is adenylation (A) domain 3. Residues 2991 to 3066 (PPRNIIEAKM…ALHDHVFMKD (76 aa)) form the Carrier 3 domain. At serine 3026 the chain carries O-(pantetheine 4'-phosphoryl)serine. Residues 3084 to 3500 (GEAPLLPIQD…NKILDGRASQ (417 aa)) are epimerase (E) domain. A thioesterase (TE) domain region spans residues 3530–3732 (TLFLLPPGEG…FSWVGNPQQV (203 aa)).

It belongs to the NRP synthetase family. Requires pantetheine 4'-phosphate as cofactor. Mg(2+) serves as cofactor.

Its subcellular location is the cytoplasm. The protein resides in the cytosol. It localises to the vacuole membrane. It carries out the reaction L-2-aminoadipate + L-valine + L-cysteine + 3 ATP + H2O = N-[(5S)-5-amino-5-carboxypentanoyl]-L-cysteinyl-D-valine + 3 AMP + 3 diphosphate + 3 H(+). It participates in antibiotic biosynthesis; penicillin G biosynthesis; penicillin G from L-alpha-aminoadipate and L-cysteine and L-valine: step 1/3. In terms of biological role, nonribosomal peptide synthetase; part of the gene cluster that mediates the biosynthesis of penicillin, the world's most important antibiotic. The trimodular NRPS acvA produces the tripeptide N-[(5S)-5-amino-5-carboxypentanoyl]-L-cysteinyl-D-valine (LLD-ACV or ACV) via condensation of the 3 residues L-2-aminoadipate, L-cysteine and L-valine. The precursor amino acids for penicillin biosynthesis are withdrawn from the vacuolar amino acid pool by the MFS-type transporter penV. Each of the constituent amino acids of the tripeptide ACV are activated as aminoacyl-adenylates with peptide bonds formed through the participation of amino acid thioester intermediates. The penicillin biosynthesis occurs via 3 enzymatic steps, the first corresponding to the production of the tripeptide N-[(5S)-5-amino-5-carboxypentanoyl]-L-cysteinyl-D-valine (LLD-ACV or ACV) by the NRPS acvA. The tripeptide ACV is then cyclized to isopenicillin N (IPN) by the isopenicillin N synthase ipnA that forms the beta-lactam nucleus. Finally, the alpha-aminoadipyl side chain is exchanged for phenylacetic acid by the isopenicillin N acyltransferase aatA to yield penicillin in the peroxisomal matrix. This is N-(5-amino-5-carboxypentanoyl)-L-cysteinyl-D-valine synthase from Penicillium chrysogenum (Penicillium notatum).